Consider the following 108-residue polypeptide: Translation initiation factor 1A (108 aa).

Residues 11–85 form the S1-like domain; it reads SVKEVPKPAE…NKCDIIYKYS (75 aa).

The protein belongs to the eIF-1A family.

Its function is as follows. Seems to be required for maximal rate of protein biosynthesis. Enhances ribosome dissociation into subunits and stabilizes the binding of the initiator Met-tRNA(I) to 40 S ribosomal subunits. This is Translation initiation factor 1A (eIF1A) from Sulfurisphaera tokodaii (strain DSM 16993 / JCM 10545 / NBRC 100140 / 7) (Sulfolobus tokodaii).